A 224-amino-acid chain; its full sequence is Phosphoribosylformylglycinamidine synthase subunit PurQ (224 aa).

In terms of domain architecture, Glutamine amidotransferase type-1 spans 2-224; it reads TVAIIRFGGS…DGQGVLEGFR (223 aa). Catalysis depends on C85, which acts as the Nucleophile. Residues H202 and E204 contribute to the active site. Residues 204–224 are disordered; it reads ERASLPDIGPTDGQGVLEGFR.

In terms of assembly, part of the FGAM synthase complex composed of 1 PurL, 1 PurQ and 2 PurS subunits.

The protein resides in the cytoplasm. The catalysed reaction is N(2)-formyl-N(1)-(5-phospho-beta-D-ribosyl)glycinamide + L-glutamine + ATP + H2O = 2-formamido-N(1)-(5-O-phospho-beta-D-ribosyl)acetamidine + L-glutamate + ADP + phosphate + H(+). The enzyme catalyses L-glutamine + H2O = L-glutamate + NH4(+). It functions in the pathway purine metabolism; IMP biosynthesis via de novo pathway; 5-amino-1-(5-phospho-D-ribosyl)imidazole from N(2)-formyl-N(1)-(5-phospho-D-ribosyl)glycinamide: step 1/2. Functionally, part of the phosphoribosylformylglycinamidine synthase complex involved in the purines biosynthetic pathway. Catalyzes the ATP-dependent conversion of formylglycinamide ribonucleotide (FGAR) and glutamine to yield formylglycinamidine ribonucleotide (FGAM) and glutamate. The FGAM synthase complex is composed of three subunits. PurQ produces an ammonia molecule by converting glutamine to glutamate. PurL transfers the ammonia molecule to FGAR to form FGAM in an ATP-dependent manner. PurS interacts with PurQ and PurL and is thought to assist in the transfer of the ammonia molecule from PurQ to PurL. This chain is Phosphoribosylformylglycinamidine synthase subunit PurQ, found in Natronomonas pharaonis (strain ATCC 35678 / DSM 2160 / CIP 103997 / JCM 8858 / NBRC 14720 / NCIMB 2260 / Gabara) (Halobacterium pharaonis).